We begin with the raw amino-acid sequence, 149 residues long: Probable glycine cleavage system H protein 2 (149 aa).

The region spanning 32 to 114 is the Lipoyl-binding domain; sequence IAVVGITDLA…YGQGWIAKIK (83 aa). The residue at position 73 (Lys-73) is an N6-lipoyllysine.

This sequence belongs to the GcvH family. In terms of assembly, the glycine cleavage system is composed of four proteins: P, T, L and H. Requires (R)-lipoate as cofactor.

Its function is as follows. The glycine cleavage system catalyzes the degradation of glycine. The H protein shuttles the methylamine group of glycine from the P protein to the T protein. The chain is Probable glycine cleavage system H protein 2 from Sulfolobus acidocaldarius (strain ATCC 33909 / DSM 639 / JCM 8929 / NBRC 15157 / NCIMB 11770).